Consider the following 202-residue polypeptide: Small ribosomal subunit protein uS5 (202 aa).

The S5 DRBM domain maps to 42-105; the sequence is LKDEVLKIMP…ILAKLSIVPV (64 aa). Residue T192 is modified to Phosphothreonine.

This sequence belongs to the universal ribosomal protein uS5 family. As to quaternary structure, component of the small ribosomal subunit. Interacts with zinc finger protein ZNF277 (via zinc-finger domains); the interaction is direct; the interaction is extra-ribosomal. Interaction with ZNF277 competes with the binding of RPS2 to protein arginine methyltransferase PRMT3. Post-translationally, citrullinated by PADI4 in the Arg/Gly-rich region. In terms of processing, asymmetric arginine dimethylation by PRMT3 occurs at multiple sites in the Arg/Gly-rich region. Monoubiquitinated by RNF10 when a ribosome has stalled during translation, leading to its degradation by the proteasome. Deubiquitinated by USP10, preventing degradation by the proteasome and promoting 40S ribosome subunit recycling following ribosome dissociation.

It localises to the cytoplasm. The protein localises to the nucleus. Its subcellular location is the nucleolus. Its function is as follows. Component of the ribosome, a large ribonucleoprotein complex responsible for the synthesis of proteins in the cell. The small ribosomal subunit (SSU) binds messenger RNAs (mRNAs) and translates the encoded message by selecting cognate aminoacyl-transfer RNA (tRNA) molecules. The large subunit (LSU) contains the ribosomal catalytic site termed the peptidyl transferase center (PTC), which catalyzes the formation of peptide bonds, thereby polymerizing the amino acids delivered by tRNAs into a polypeptide chain. The nascent polypeptides leave the ribosome through a tunnel in the LSU and interact with protein factors that function in enzymatic processing, targeting, and the membrane insertion of nascent chains at the exit of the ribosomal tunnel. Plays a role in the assembly and function of the 40S ribosomal subunit. Mutations in this protein affects the control of translational fidelity. Involved in nucleolar processing of pre-18S ribosomal RNA and ribosome assembly. In Cricetulus griseus (Chinese hamster), this protein is Small ribosomal subunit protein uS5 (RPS2).